Reading from the N-terminus, the 149-residue chain is Transcription factor HY5-like (149 aa).

The tract at residues 1–77 (MSLQRPNGNS…RRRGRNPVDK (77 aa)) is disordered. Residues 23–36 (ESDEELLMVPDMEA) are interaction with COP1. Ser24 is subject to Phosphoserine. The segment covering 55–64 (ELDQTQNGVS) has biased composition (polar residues). The region spanning 78–141 (EYRSLKRLLR…TMLRKMLINT (64 aa)) is the bZIP domain. The basic motif stretch occupies residues 80–100 (RSLKRLLRNRVSAQQARERKK). The interval 106-134 (LESRANELQNNNDQLEEKISTLTNENTML) is leucine-zipper.

Belongs to the bZIP family. In terms of assembly, heterodimer; heterodimerizes with HY5 via the leucine-zipper domains. Interacts with COP1 WD40 domain. Interacts with BBX24/STO and BBX25/STH. Ubiquitinated by COP1. Ubiquitination takes place in darkness and leads to its subsequent degradation, thereby preventing the activation of photomorphogenesis signals.

The protein resides in the nucleus. Transcription factor that promotes photomorphogenesis in light. Acts downstream of the light receptor network and directly affects transcription of light-induced genes. Specifically involved in the blue light specific pathway, suggesting that it participates in transmission of cryptochromes (CRY1 and CRY2) signals to downstream responses. In darkness, its degradation prevents the activation of light-induced genes. The protein is Transcription factor HY5-like (HYH) of Arabidopsis thaliana (Mouse-ear cress).